The sequence spans 365 residues: MSDGAALTEDAVGDTVLSIDAMGGDLGPASVVSGLAKASAKNPTLRFIVHGDKPELERLIAKKRGLADVCELRHTKDVVTMDAKPSHVMRNGKDTSMWSTIEAVRDGDASVAVSCGNTGALMAISMIRLRKLEGVNRPAIACLWPSRNPSGFNVMLDVGADIRADAEDLLQYALMGASYARNGLDLSRPRIGLLNVGTEEHKGRAELKVAAELIDRAAPAADFEFVGFVEGSDLPSDRVDVIVTDGFTGNVALKTGEGTARLIRELLEQAFKKTPFSRVAALLAFTSLRRLSKRIDPRRVNGGVFLGLNGTVVKSHGSADPTGVAAAINLAAQLSATGFHKRLAARIAQAEAAASVAIQKEGSSE.

The protein belongs to the PlsX family. Homodimer. Probably interacts with PlsY.

The protein resides in the cytoplasm. It carries out the reaction a fatty acyl-[ACP] + phosphate = an acyl phosphate + holo-[ACP]. It participates in lipid metabolism; phospholipid metabolism. Catalyzes the reversible formation of acyl-phosphate (acyl-PO(4)) from acyl-[acyl-carrier-protein] (acyl-ACP). This enzyme utilizes acyl-ACP as fatty acyl donor, but not acyl-CoA. The sequence is that of Phosphate acyltransferase from Jannaschia sp. (strain CCS1).